The chain runs to 265 residues: MKNIHKIFSPEKKGKEKISVVTCYDFSFARILGETPIDSILVGDSLGMVFQGNSSTLPVTLEEMIYHTKVVRRGAPDKFIIADLPFLSYQTSIEEGIRSAGRMMKETDCDAVKIEGGSDFICELVAILKQIGIPVMGHLGLTPQSVHVFGGHRVQGKGEESSAKLLREAVALSESGAFSIVLEMIPAELGKRVSEEVGVPTIGIGAGPDCDGQVLVLNDLLGLDANFQPKFLKKFSNLHSIVKDAIESYHEEVRSGEFPGKDHSF.

2 residues coordinate Mg(2+): Asp44 and Asp83. 3-methyl-2-oxobutanoate is bound by residues 44–45 (DS), Asp83, and Lys113. Position 115 (Glu115) interacts with Mg(2+). The Proton acceptor role is filled by Glu183.

The protein belongs to the PanB family. Homodecamer; pentamer of dimers. It depends on Mg(2+) as a cofactor.

The protein resides in the cytoplasm. It carries out the reaction 3-methyl-2-oxobutanoate + (6R)-5,10-methylene-5,6,7,8-tetrahydrofolate + H2O = 2-dehydropantoate + (6S)-5,6,7,8-tetrahydrofolate. Its pathway is cofactor biosynthesis; (R)-pantothenate biosynthesis; (R)-pantoate from 3-methyl-2-oxobutanoate: step 1/2. Functionally, catalyzes the reversible reaction in which hydroxymethyl group from 5,10-methylenetetrahydrofolate is transferred onto alpha-ketoisovalerate to form ketopantoate. This chain is 3-methyl-2-oxobutanoate hydroxymethyltransferase, found in Leptospira borgpetersenii serovar Hardjo-bovis (strain L550).